Here is a 126-residue protein sequence, read N- to C-terminus: MVSPHRLLKDYQQLLSLSQKILHLAISGQWDTLVEQEIVYVQSVEGLVNTPIPDEIDSVMRLHLRQILQEVMDNEAKVKQLLQKRMDELSSLMGQSLKQKSINATYSEFAGQRRLLDDPLPDETRS.

Residues 1-50 (MVSPHRLLKDYQQLLSLSQKILHLAISGQWDTLVEQEIVYVQSVEGLVNT) are required for homodimerization. Positions 60–98 (MRLHLRQILQEVMDNEAKVKQLLQKRMDELSSLMGQSLK) are fliD binding.

Belongs to the FliT family. Homodimer. Interacts with FliD and FlhC.

It localises to the cytoplasm. The protein resides in the cytosol. In terms of biological role, dual-function protein that regulates the transcription of class 2 flagellar operons and that also acts as an export chaperone for the filament-capping protein FliD. As a transcriptional regulator, acts as an anti-FlhDC factor; it directly binds FlhC, thus inhibiting the binding of the FlhC/FlhD complex to class 2 promoters, resulting in decreased expression of class 2 flagellar operons. As a chaperone, effects FliD transition to the membrane by preventing its premature polymerization, and by directing it to the export apparatus. This chain is Flagellar protein FliT, found in Pectobacterium atrosepticum (strain SCRI 1043 / ATCC BAA-672) (Erwinia carotovora subsp. atroseptica).